The chain runs to 329 residues: E3 ubiquitin-protein ligase SINA-like 4 (329 aa).

Residues 1–12 (MTKLGRRNDGGG) are compositionally biased toward basic and acidic residues. Residues 1–58 (MTKLGRRNDGGGKSHRSSTKRQRRTSVSVDDPSPGEEEEKTLVVLTDDSDSEEDDKPL) are disordered. The span at 13–24 (KSHRSSTKRQRR) shows a compositional bias: basic residues. Residues 86–122 (CPNCFDPLKKPIFQCNNGHLACFLCCIKLKKRCSFCK) form an RING-type; degenerate zinc finger. An SBD region spans residues 136 to 325 (VIKAGLVSCS…MEISIGDKND (190 aa)). The segment at 139–198 (AGLVSCSNAIYGCKQSTTYGNQLQSHEKVCVFAPCSCPIKDCNYIGFYKDLINHFRATHK) adopts an SIAH-type zinc-finger fold. Zn(2+) is bound by residues Cys144, Cys151, His164, Cys168, Cys175, Cys180, His192, and His197.

Belongs to the SINA (Seven in absentia) family.

The catalysed reaction is S-ubiquitinyl-[E2 ubiquitin-conjugating enzyme]-L-cysteine + [acceptor protein]-L-lysine = [E2 ubiquitin-conjugating enzyme]-L-cysteine + N(6)-ubiquitinyl-[acceptor protein]-L-lysine.. It participates in protein modification; protein ubiquitination. Its function is as follows. E3 ubiquitin-protein ligase that mediates ubiquitination and subsequent proteasomal degradation of target proteins. E3 ubiquitin ligases accept ubiquitin from an E2 ubiquitin-conjugating enzyme in the form of a thioester and then directly transfers the ubiquitin to targeted substrates. It probably triggers the ubiquitin-mediated degradation of different substrates. The sequence is that of E3 ubiquitin-protein ligase SINA-like 4 from Arabidopsis thaliana (Mouse-ear cress).